Here is a 157-residue protein sequence, read N- to C-terminus: 2-C-methyl-D-erythritol 2,4-cyclodiphosphate synthase (157 aa).

2 residues coordinate a divalent metal cation: Asp-8 and His-10. 4-CDP-2-C-methyl-D-erythritol 2-phosphate is bound by residues 8 to 10 (DIH) and 34 to 35 (HS). His-42 contributes to the a divalent metal cation binding site. 4-CDP-2-C-methyl-D-erythritol 2-phosphate-binding positions include 56–58 (DIG) and 132–135 (TTNE).

Belongs to the IspF family. As to quaternary structure, homotrimer. Requires a divalent metal cation as cofactor.

The catalysed reaction is 4-CDP-2-C-methyl-D-erythritol 2-phosphate = 2-C-methyl-D-erythritol 2,4-cyclic diphosphate + CMP. It functions in the pathway isoprenoid biosynthesis; isopentenyl diphosphate biosynthesis via DXP pathway; isopentenyl diphosphate from 1-deoxy-D-xylulose 5-phosphate: step 4/6. Its function is as follows. Involved in the biosynthesis of isopentenyl diphosphate (IPP) and dimethylallyl diphosphate (DMAPP), two major building blocks of isoprenoid compounds. Catalyzes the conversion of 4-diphosphocytidyl-2-C-methyl-D-erythritol 2-phosphate (CDP-ME2P) to 2-C-methyl-D-erythritol 2,4-cyclodiphosphate (ME-CPP) with a corresponding release of cytidine 5-monophosphate (CMP). In Synechococcus sp. (strain JA-3-3Ab) (Cyanobacteria bacterium Yellowstone A-Prime), this protein is 2-C-methyl-D-erythritol 2,4-cyclodiphosphate synthase.